A 340-amino-acid polypeptide reads, in one-letter code: Short-chain dehydrogenase/reductase prx1 (340 aa).

NADP(+)-binding residues include I60, K84, D104, N131, and K162. The active-site Proton donor is the S184. NADP(+) contacts are provided by Y210 and K214. Y210 (proton acceptor) is an active-site residue. The active-site Lowers pKa of active site Tyr is K214.

It belongs to the short-chain dehydrogenases/reductases (SDR) family.

It functions in the pathway sesquiterpene biosynthesis. Short-chain dehydrogenase/reductase; part of the gene cluster that mediates the biosynthesis of PR-toxin, a bicyclic sesquiterpene belonging to the eremophilane class and acting as a mycotoxin. The first step of the pathway is catalyzed by the aristolochene synthase which performs the cyclization of trans,trans-farnesyl diphosphate (FPP) to the bicyclic sesquiterpene aristolochene. Following the formation of aristolochene, the non-oxygenated aristolochene is converted to the trioxygenated intermediate eremofortin B, via 7-epi-neopetasone. This conversion appears to involve three enzymes, a hydroxysterol oxidase-like enzyme, the quinone-oxidase prx3 that forms the quinone-type-structure in the bicyclic nucleus of aristolochene with the C8-oxo group and the C-3 hydroxyl group, and the P450 monooxygenase prx9 that introduces the epoxide at the double bond between carbons 1 and 2. No monoxy or dioxy-intermediates have been reported to be released to the broth, so these three early oxidative reactions may be coupled together. Eremofortin B is further oxidized by another P450 monooxygenase, that introduces a second epoxide between carbons 7 and 11 prior to acetylation to eremofortin A by the acetyltransferase prx11. The second epoxidation may be performed by a second P450 monooxygenase. After the acetylation step, eremofortin A is converted to eremofortin C and then to PR-toxin. First the conversion of eremofortin A to eremofortin C proceeds by oxidation of the side chain of the molecule at C-12 and is catalyzed by the short-chain oxidoreductase prx1. The cytochrome P450 monooxygenase prx8 also plays a role in this step. The primary alcohol formed at C-12 is finally oxidized by the short-chain alcohol dehydrogenase prx4 that forms PR-toxin. The protein is Short-chain dehydrogenase/reductase prx1 of Penicillium rubens (strain ATCC 28089 / DSM 1075 / NRRL 1951 / Wisconsin 54-1255) (Penicillium chrysogenum).